Here is a 422-residue protein sequence, read N- to C-terminus: Dihydroorotase (422 aa).

Zn(2+) is bound by residues His59 and His61. Residues 61–63 (HFR) and Asn93 contribute to the substrate site. Residues Asp150, His177, and His230 each coordinate Zn(2+). Asn276 lines the substrate pocket. Asp303 contacts Zn(2+). Residue Asp303 is part of the active site. His307 contributes to the substrate binding site.

Belongs to the metallo-dependent hydrolases superfamily. DHOase family. Class I DHOase subfamily. Requires Zn(2+) as cofactor.

The enzyme catalyses (S)-dihydroorotate + H2O = N-carbamoyl-L-aspartate + H(+). It functions in the pathway pyrimidine metabolism; UMP biosynthesis via de novo pathway; (S)-dihydroorotate from bicarbonate: step 3/3. Its function is as follows. Catalyzes the reversible cyclization of carbamoyl aspartate to dihydroorotate. The protein is Dihydroorotase of Streptococcus thermophilus (strain CNRZ 1066).